The sequence spans 320 residues: MRSAQVYRWQIPMDAGVVLRDRRLKTRDGLYVCLREGEREGWGEISPLPGFSQETWEDAQSVLLAWVNNWLAGDCELPQMPSVAFGVSCALAELAETLPQAANYRAAPLCNGDPDDLILKLADMPGEKVAKVKVGLYEAVRDGMVVNLLLEAIPDLHLRLDANRAWTPLKGQQFAKYVNLDYRHRIAFLEEPCKTRDDSRAFARETGIAIAWDESLREPDFAFVAEEGVRAVVIKPTLTGSLDKVREQVQAAHALGLTAVISSSIESSLGLTQLARIAAWLTPDTIPGLDTLDLMQAQQVRRWPGSLLPLVDVDALEQLL.

Lys-133 functions as the Proton donor in the catalytic mechanism. Residues Asp-161, Glu-190, and Asp-213 each coordinate Mg(2+). Residue Lys-235 is the Proton acceptor of the active site.

The protein belongs to the mandelate racemase/muconate lactonizing enzyme family. MenC type 1 subfamily. The cofactor is a divalent metal cation.

The catalysed reaction is (1R,6R)-6-hydroxy-2-succinyl-cyclohexa-2,4-diene-1-carboxylate = 2-succinylbenzoate + H2O. The protein operates within quinol/quinone metabolism; 1,4-dihydroxy-2-naphthoate biosynthesis; 1,4-dihydroxy-2-naphthoate from chorismate: step 4/7. Its pathway is quinol/quinone metabolism; menaquinone biosynthesis. Converts 2-succinyl-6-hydroxy-2,4-cyclohexadiene-1-carboxylate (SHCHC) to 2-succinylbenzoate (OSB). The chain is o-succinylbenzoate synthase from Escherichia coli O127:H6 (strain E2348/69 / EPEC).